Here is a 1960-residue protein sequence, read N- to C-terminus: [F-actin]-monooxygenase MICAL3 (1960 aa).

The segment at 2–494 (EESKNEATNR…RHLYDTGDTK (493 aa)) is monooxygenase domain. Residues Cys97, 116–118 (EKR), 123–125 (RNN), Phe183, Tyr298, and Asp398 contribute to the FAD site. The Calponin-homology (CH) domain occupies 518–624 (VARSSKLLGW…YLTQFYEMFK (107 aa)). Ser649 is subject to Phosphoserine. The tract at residues 658–704 (GQTISRKRSPKDKKEKDLDGAGKRRKTSQSEEEDTPRGHRGARPTLV) is disordered. The segment covering 669-679 (DKKEKDLDGAG) has biased composition (basic and acidic residues). Phosphoserine occurs at positions 685 and 687. Residues 762–824 (DTCYFCQKRV…KPHYCYRLSG (63 aa)) enclose the LIM zinc-binding domain. Cys764, Cys767, His785, Cys788, Cys791, Cys794, Cys814, and His817 together coordinate Zn(2+). Disordered regions lie at residues 826-887 (AQRK…LRGT) and 906-1295 (LEEV…EALK). At Thr887 the chain carries Phosphothreonine. Ser971 carries the phosphoserine modification. The span at 984–1014 (GEEEEEDEEDEEEEEEEEDEEDEEEDEDESS) shows a compositional bias: acidic residues. 2 stretches are compositionally biased toward basic and acidic residues: residues 1039–1051 (HWTH…EERA) and 1072–1084 (DVDS…KGEA). Phosphoserine is present on residues Ser1129, Ser1139, Ser1156, and Ser1188. Composition is skewed to pro residues over residues 1192-1203 (SPLPEPSTPPAE) and 1217-1233 (RTPP…PPTQ). Ser1250 is subject to Phosphoserine. Thr1252 carries the post-translational modification Phosphothreonine. Phosphoserine occurs at positions 1254, 1286, and 1313. A compositionally biased stretch (polar residues) spans 1277–1286 (QGVTKDTLGS). Disordered regions lie at residues 1316–1550 (LTPV…KRGL) and 1564–1782 (RMRA…EEEL). Thr1317 carries the post-translational modification Phosphothreonine. A compositionally biased stretch (basic and acidic residues) spans 1379-1393 (PDREPKGPREEHRDL). Residues 1394–1406 (SSSSGLGLQGSSS) show a composition bias toward low complexity. Ser1404 is subject to Phosphoserine. Residues 1407 to 1425 (RTRTPGSQSFNTSDSTMLT) are compositionally biased toward polar residues. Thr1425 is modified (phosphothreonine). The span at 1485–1503 (SVDEIPFADDVEDTYDDNT) shows a compositional bias: acidic residues. Over residues 1594–1611 (AAAAPRTPRTPAPRRATA) the composition is skewed to low complexity. Basic and acidic residues predominate over residues 1616 to 1627 (GPEEPAPRHEAT). The segment covering 1633 to 1653 (SPPSDSGGPDGSVTSSEGSSG) has biased composition (low complexity). A compositionally biased stretch (basic residues) spans 1654–1672 (KSKKRSSLFSPRRSKKEKK). A phosphoserine mark is found at Ser1660 and Ser1663. Residues 1718–1727 (CPSTPSSGTT) show a composition bias toward polar residues. A compositionally biased stretch (basic and acidic residues) spans 1762-1778 (VLERTSQKSRKEPRTYT). Positions 1779–1952 (EEELNAKLTR…DKDLEAAMLS (174 aa)) form a coiled coil. A bMERB domain is found at 1799 to 1948 (KQEELKRLHR…EKEEDKDLEA (150 aa)). Position 1870 is a phosphoserine (Ser1870).

Belongs to the Mical family. Interacts with RAB1B, RAB8A, RAB10, RAB13 and RAB15 (in their GTP-bound forms); binding to RAB1B is of low affinity compared to other Rab proteins; at least in case of RAB8A can bind 2 molecules of RAB8A simultaneously through a high and a low affinity binding site, respectively. Interacts with ERC1 and RAB8A; may bridge ERC1 with RAB8A. Interacts with KIF23 and ERC1; enhances the interaction between KIF23 and ERC1. Interacts with NINL. FAD is required as a cofactor.

It is found in the cytoplasm. It localises to the cell cortex. The protein resides in the cytoskeleton. The protein localises to the nucleus. Its subcellular location is the midbody. It is found in the spindle. It localises to the cilium basal body. The catalysed reaction is L-methionyl-[F-actin] + NADPH + O2 + H(+) = L-methionyl-(R)-S-oxide-[F-actin] + NADP(+) + H2O. Functionally, monooxygenase that promotes depolymerization of F-actin by mediating oxidation of specific methionine residues on actin to form methionine-sulfoxide, resulting in actin filament disassembly and preventing repolymerization. In the absence of actin, it also functions as a NADPH oxidase producing H(2)O(2). Seems to act as Rab effector protein and play a role in vesicle trafficking. Involved in exocytic vesicles tethering and fusion: the monooxygenase activity is required for this process and implicates RAB8A associated with exocytotic vesicles. Required for cytokinesis. Contributes to stabilization and/or maturation of the intercellular bridge independently of its monooxygenase activity. Promotes recruitment of Rab8 and ERC1 to the intercellular bridge, and together these proteins are proposed to function in timely abscission. The chain is [F-actin]-monooxygenase MICAL3 (MICAL3) from Bos taurus (Bovine).